The sequence spans 664 residues: MRGCLQLARWLSAAPKGTAASLTRAPFGLANATRFFTNSAARAGSRATASKPVTDLENRISAIPIERYRNFCIVAHVDHGKSTLSDRLLELTGTIQPGSNKQVLDKLDVERERGITVKAQTCTMIYNHNGEDYLLHLVDTPGHVDFRAEVSRSYASCGGALLLVDASQGVQAQTVANFYLAFAQGLELIPVINKVDLPSAEPQRALDQMKHTFELDTENAVMVSAKTGLNVEQLLPTVVDKIPAPIGDCKKPLRMLLVDSWYDSYKGVICLVRIFDGELRAGQQVVSFATGLKYYVGEVGIMYPNETAQSVIRAGQVGYIYFNPGMKRSQEAKIGDTFTKVGSEKAVQPLPGFEEPKAMVFVAAYPVDADHFEHLEDSINQLVLNDRSITVQKESSEALGAGFRLGFLGTLHCSVFEDRLRQEHGASIIITPPSVPVKVIWTDGKEEIITSPVRFPDDEEVRNKIAEIQEPYVLATLTFPEEYLGKVIELCEANRGEQKTLEYFTATQVILKYELPLAQLVDDFFGKLKGSTKGYASLDYEESAWQPGHIVKLQLLVNKAPVDAVARIMHSSQVDRLARQWVTKFKQHVDRQLFEVVIQAAVGRKVIARETVKPYRKDVLAKLHASDVSRRRKLLEKQKEGRKRLRAVGNVVIEHKAFQAFLAK.

Residues 1-43 constitute a mitochondrion transit peptide; that stretch reads MRGCLQLARWLSAAPKGTAASLTRAPFGLANATRFFTNSAARA. The tr-type G domain occupies 66 to 246; it reads ERYRNFCIVA…TVVDKIPAPI (181 aa). Residues 75–82, 139–143, and 193–196 each bind GTP; these read AHVDHGKS, DTPGH, and NKVD.

This sequence belongs to the TRAFAC class translation factor GTPase superfamily. Classic translation factor GTPase family. LepA subfamily.

The protein localises to the mitochondrion inner membrane. The catalysed reaction is GTP + H2O = GDP + phosphate + H(+). Promotes mitochondrial protein synthesis. May act as a fidelity factor of the translation reaction, by catalyzing a one-codon backward translocation of tRNAs on improperly translocated ribosomes. Binds to mitochondrial ribosomes in a GTP-dependent manner. This chain is Translation factor guf1, mitochondrial (guf1), found in Aspergillus clavatus (strain ATCC 1007 / CBS 513.65 / DSM 816 / NCTC 3887 / NRRL 1 / QM 1276 / 107).